The sequence spans 180 residues: uncharacterized protein (180 aa).

Positions Ser-138 to Glu-180 are disordered. Polar residues predominate over residues Pro-145–Thr-154. The span at Asp-159–Asn-169 shows a compositional bias: basic and acidic residues.

This is an uncharacterized protein from Acidianus filamentous virus 2 (isolate Italy/Pozzuoli) (AFV-2).